A 377-amino-acid chain; its full sequence is Putative F-box only protein 10 (377 aa).

The F-box domain maps to Met-1–His-46.

This is Putative F-box only protein 10 (FBX10) from Arabidopsis thaliana (Mouse-ear cress).